The chain runs to 406 residues: Imidazolonepropionase (406 aa).

Residues histidine 72 and histidine 74 each coordinate Fe(3+). Histidine 72 and histidine 74 together coordinate Zn(2+). 4-imidazolone-5-propanoate-binding residues include arginine 81, tyrosine 144, and histidine 177. Residue tyrosine 144 coordinates N-formimidoyl-L-glutamate. Histidine 242 lines the Fe(3+) pocket. Position 242 (histidine 242) interacts with Zn(2+). Residue glutamine 245 participates in 4-imidazolone-5-propanoate binding. Aspartate 317 contacts Fe(3+). Residue aspartate 317 participates in Zn(2+) binding. Positions 319 and 321 each coordinate N-formimidoyl-L-glutamate. A 4-imidazolone-5-propanoate-binding site is contributed by threonine 322.

Belongs to the metallo-dependent hydrolases superfamily. HutI family. Requires Zn(2+) as cofactor. Fe(3+) serves as cofactor.

The protein localises to the cytoplasm. The enzyme catalyses 4-imidazolone-5-propanoate + H2O = N-formimidoyl-L-glutamate. It participates in amino-acid degradation; L-histidine degradation into L-glutamate; N-formimidoyl-L-glutamate from L-histidine: step 3/3. In terms of biological role, catalyzes the hydrolytic cleavage of the carbon-nitrogen bond in imidazolone-5-propanoate to yield N-formimidoyl-L-glutamate. It is the third step in the universal histidine degradation pathway. This is Imidazolonepropionase from Yersinia pseudotuberculosis serotype O:3 (strain YPIII).